Consider the following 735-residue polypeptide: MPLAQLKEPWPLMELVPLDPENGQTSGEEAGLQPSKDEGVLKEISITHHVKAGSEKADPSHFELLKVLGQGSFGKVFLVRKVTRPDSGHLYAMKVLKKATLKVRDRVRTKMERDILADVNHPFVVKLHYAFQTEGKLYLILDFLRGGDLFTRLSKEVMFTEEDVKFYLAELALGLDHLHSLGIIYRDLKPENILLDEEGHIKLTDFGLSKEAIDHEKKAYSFCGTVEYMAPEVVNRQGHSHSADWWSYGVLMFEMLTGSLPFQGKDRKETMTLILKAKLGMPQFLSTEAQSLLRALFKRNPANRLGSGPDGAEEIKRHVFYSTIDWNKLYRREIKPPFKPAVAQPDDTFYFDTEFTSRTPKDSPGIPPSAGAHQLFRGFSFVATGLMEDDGKPRAPQAPLHSVVQQLHGKNLVFSDGYVVKETIGVGSYSECKRCVHKATNMEYAVKVIDKSKRDPSEEIEILLRYGQHPNIITLKDVYDDGKHVYLVTELMRGGELLDKILRQKFFSEREASFVLHTIGKTVEYLHSQGVVHRDLKPSNILYVDESGNPECLRICDFGFAKQLRAENGLLMTPCYTANFVAPEVLKRQGYDEGCDIWSLGILLYTMLAGYTPFANGPSDTPEEILTRIGSGKFTLSGGNWNTVSETAKDLVSKMLHVDPHQRLTAKQVLQHPWVTQKDKLPQSQLSHQDLQLVKGAMAATYSALNSSKPTPQLKPIESSILAQRRVRKLPSTTL.

Serine 54 carries the post-translational modification Phosphoserine. Positions 62-321 constitute a Protein kinase 1 domain; it reads FELLKVLGQG…AEEIKRHVFY (260 aa). Residues 68–76 and lysine 94 each bind ATP; that span reads LGQGSFGKV. Aspartate 187 functions as the Proton acceptor in the catalytic mechanism. Phosphoserine; by PDPK1 is present on serine 221. At serine 307 the chain carries Phosphoserine. An AGC-kinase C-terminal domain is found at 322–391; it reads STIDWNKLYR…VATGLMEDDG (70 aa). Threonine 359 carries the phosphothreonine modification. 2 positions are modified to phosphoserine: serine 363 and serine 369. Serine 380 is subject to Phosphoserine; by autocatalysis. The region spanning 418–675 is the Protein kinase 2 domain; that stretch reads YVVKETIGVG…AKQVLQHPWV (258 aa). ATP contacts are provided by residues 424–432 and lysine 447; that span reads IGVGSYSEC. The active-site Proton acceptor is the aspartate 535. Position 573 is a phosphothreonine (threonine 573). Residue serine 732 is modified to Phosphoserine.

Belongs to the protein kinase superfamily. AGC Ser/Thr protein kinase family. S6 kinase subfamily. Forms a complex with either MAPK1/ERK2 or MAPK3/ERK1 in quiescent cells. Transiently dissociates following mitogenic stimulation. Interacts with ETV1/ER81 and FGFR1. As to quaternary structure, (Microbial infection) Interacts with Kaposi's sarcoma-associated herpesvirus/HHV-8 protein ORF45; this interaction allows RPS6KA1 activation. It depends on Mg(2+) as a cofactor. Post-translationally, activated by phosphorylation at Ser-221 by PDPK1. Autophosphorylated on Ser-380, as part of the activation process. May be phosphorylated at Thr-359 and Ser-363 by MAPK1/ERK2 and MAPK3/ERK1. N-terminal myristoylation results in an activated kinase in the absence of added growth factors.

It is found in the nucleus. The protein resides in the cytoplasm. The enzyme catalyses L-seryl-[protein] + ATP = O-phospho-L-seryl-[protein] + ADP + H(+). The catalysed reaction is L-threonyl-[protein] + ATP = O-phospho-L-threonyl-[protein] + ADP + H(+). Its activity is regulated as follows. Upon extracellular signal or mitogen stimulation, phosphorylated at Thr-573 in the C-terminal kinase domain (CTKD) by MAPK1/ERK2 and MAPK3/ERK1. The activated CTKD then autophosphorylates Ser-380, allowing binding of PDPK1, which in turn phosphorylates Ser-221 in the N-terminal kinase domain (NTDK) leading to the full activation of the protein and subsequent phosphorylation of the substrates by the NTKD. Serine/threonine-protein kinase that acts downstream of ERK (MAPK1/ERK2 and MAPK3/ERK1) signaling and mediates mitogenic and stress-induced activation of the transcription factors CREB1, ETV1/ER81 and NR4A1/NUR77, regulates translation through RPS6 and EIF4B phosphorylation, and mediates cellular proliferation, survival, and differentiation by modulating mTOR signaling and repressing pro-apoptotic function of BAD and DAPK1. In fibroblast, is required for EGF-stimulated phosphorylation of CREB1, which results in the subsequent transcriptional activation of several immediate-early genes. In response to mitogenic stimulation (EGF and PMA), phosphorylates and activates NR4A1/NUR77 and ETV1/ER81 transcription factors and the cofactor CREBBP. Upon insulin-derived signal, acts indirectly on the transcription regulation of several genes by phosphorylating GSK3B at 'Ser-9' and inhibiting its activity. Phosphorylates RPS6 in response to serum or EGF via an mTOR-independent mechanism and promotes translation initiation by facilitating assembly of the pre-initiation complex. In response to insulin, phosphorylates EIF4B, enhancing EIF4B affinity for the EIF3 complex and stimulating cap-dependent translation. Is involved in the mTOR nutrient-sensing pathway by directly phosphorylating TSC2 at 'Ser-1798', which potently inhibits TSC2 ability to suppress mTOR signaling, and mediates phosphorylation of RPTOR, which regulates mTORC1 activity and may promote rapamycin-sensitive signaling independently of the PI3K/AKT pathway. Also involved in feedback regulation of mTORC1 and mTORC2 by phosphorylating DEPTOR. Mediates cell survival by phosphorylating the pro-apoptotic proteins BAD and DAPK1 and suppressing their pro-apoptotic function. Promotes the survival of hepatic stellate cells by phosphorylating CEBPB in response to the hepatotoxin carbon tetrachloride (CCl4). Mediates induction of hepatocyte prolifration by TGFA through phosphorylation of CEBPB. Is involved in cell cycle regulation by phosphorylating the CDK inhibitor CDKN1B, which promotes CDKN1B association with 14-3-3 proteins and prevents its translocation to the nucleus and inhibition of G1 progression. Phosphorylates EPHA2 at 'Ser-897', the RPS6KA-EPHA2 signaling pathway controls cell migration. In response to mTORC1 activation, phosphorylates EIF4B at 'Ser-406' and 'Ser-422' which stimulates bicarbonate cotransporter SLC4A7 mRNA translation, increasing SLC4A7 protein abundance and function. Its function is as follows. (Microbial infection) Promotes the late transcription and translation of viral lytic genes during Kaposi's sarcoma-associated herpesvirus/HHV-8 infection, when constitutively activated. The protein is Ribosomal protein S6 kinase alpha-1 (RPS6KA1) of Homo sapiens (Human).